The following is a 361-amino-acid chain: Peptide chain release factor 1 (361 aa).

Gln236 bears the N5-methylglutamine mark.

It belongs to the prokaryotic/mitochondrial release factor family. In terms of processing, methylated by PrmC. Methylation increases the termination efficiency of RF1.

It localises to the cytoplasm. Peptide chain release factor 1 directs the termination of translation in response to the peptide chain termination codons UAG and UAA. This chain is Peptide chain release factor 1, found in Lactobacillus delbrueckii subsp. bulgaricus (strain ATCC 11842 / DSM 20081 / BCRC 10696 / JCM 1002 / NBRC 13953 / NCIMB 11778 / NCTC 12712 / WDCM 00102 / Lb 14).